Consider the following 520-residue polypeptide: 2-methylcitrate dehydratase, mitochondrial (520 aa).

Residues 1-37 (MRAFRSAANFGAASNIYRKSFTPASIASNRFVSARMS) constitute a mitochondrion transit peptide.

The protein belongs to the PrpD family. As to quaternary structure, monomer.

The protein localises to the mitochondrion. The enzyme catalyses (2S,3S)-2-methylcitrate = 2-methyl-cis-aconitate + H2O. It functions in the pathway organic acid metabolism; propanoate degradation. With respect to regulation, several bivalent metal ions, such as nickel, copper, zinc, mercury, and lead, inhibit the activity to some extent. Inhibited by structural analogs such as citrate, cis-aconitate, isocitrate, 2-methylisocitrate, tricarballylate and fluorocitrate, but not by trans-aconitate or adipate. In terms of biological role, component of the methylcitrate cycle that catalyzes the dehydration of 2-methylcitrate to 2-methyl-cis-aconitate. The methylcitrate cycle is a metabolic pathway for the consumption of propionic acid. This chain is 2-methylcitrate dehydratase, mitochondrial, found in Yarrowia lipolytica (strain CLIB 122 / E 150) (Yeast).